Reading from the N-terminus, the 562-residue chain is Tubby-related protein 2 (562 aa).

The disordered stretch occupies residues 1-81 (MDREGPRGPR…RRGEERFQSD (81 aa)). Positions 35 to 46 (QKLEQQRQLFEK) are enriched in basic and acidic residues. A phosphoserine mark is found at Ser-152, Ser-153, and Ser-155. Positions 179 to 294 (LRRGWLASPG…SNHNAWNMTC (116 aa)) are disordered. Thr-211 carries the phosphothreonine modification. Residue Ser-213 is modified to Phosphoserine. The span at 225 to 240 (DGDHGDLAPCKVEENT) shows a compositional bias: basic and acidic residues. Polar residues predominate over residues 285–294 (SNHNAWNMTC).

Belongs to the TUB family. As to expression, expressed in retina and testis.

The protein resides in the cytoplasm. The protein localises to the secreted. The chain is Tubby-related protein 2 (Tulp2) from Mus musculus (Mouse).